Reading from the N-terminus, the 153-residue chain is Arginine repressor (153 aa).

Belongs to the ArgR family.

It localises to the cytoplasm. Its pathway is amino-acid biosynthesis; L-arginine biosynthesis [regulation]. Functionally, regulates arginine biosynthesis genes. In Actinobacillus pleuropneumoniae serotype 5b (strain L20), this protein is Arginine repressor.